Here is a 206-residue protein sequence, read N- to C-terminus: Small ribosomal subunit protein uS4 (206 aa).

The span at 25–39 shows a compositional bias: basic and acidic residues; that stretch reads DKLLDRKPNGPGKER. The tract at residues 25 to 49 is disordered; it reads DKLLDRKPNGPGKERGARKRGKTSV. Residues 95–157 form the S4 RNA-binding domain; sequence QRLDNTIYRM…KGIQNLIRHN (63 aa).

The protein belongs to the universal ribosomal protein uS4 family. In terms of assembly, part of the 30S ribosomal subunit. Contacts protein S5. The interaction surface between S4 and S5 is involved in control of translational fidelity.

One of the primary rRNA binding proteins, it binds directly to 16S rRNA where it nucleates assembly of the body of the 30S subunit. In terms of biological role, with S5 and S12 plays an important role in translational accuracy. The polypeptide is Small ribosomal subunit protein uS4 (Treponema denticola (strain ATCC 35405 / DSM 14222 / CIP 103919 / JCM 8153 / KCTC 15104)).